The primary structure comprises 68 residues: Conotoxin Cal14.13a (68 aa).

Residues 1–21 (MKLCVVIVLLMLAMPFNGGEA) form the signal peptide. Residues 22 to 38 (SRFFNQHARSQRSGMKT) constitute a propeptide that is removed on maturation. Valine 66 carries the post-translational modification Valine amide.

In terms of processing, contains 2 disulfide bonds. Expressed by the venom duct.

Its subcellular location is the secreted. Its function is as follows. Probable neurotoxin with unknown target. Possibly targets ion channels. The sequence is that of Conotoxin Cal14.13a from Californiconus californicus (California cone).